The sequence spans 138 residues: MRLTQGTFSFLPDLTDEQISKQLTYIVSKGLSANVEYTDDPHPRNSYWELWGLPLFDVKDASAVMYEISSCRKAKPNYYIKVNAFDNTRGIESCVMSFIVNRPINEPGFLLQRQDFEGRTMKYSLHSYATEKPEGARY.

Belongs to the RuBisCO small chain family. Heterohexadecamer of 8 large and 8 small subunits.

The protein localises to the plastid. The protein resides in the chloroplast. Functionally, ruBisCO catalyzes two reactions: the carboxylation of D-ribulose 1,5-bisphosphate, the primary event in carbon dioxide fixation, as well as the oxidative fragmentation of the pentose substrate in the photorespiration process. Both reactions occur simultaneously and in competition at the same active site. Although the small subunit is not catalytic it is essential for maximal activity. This is Ribulose bisphosphate carboxylase small subunit from Pyropia suborbiculata (Red alga).